Consider the following 189-residue polypeptide: UPF0301 protein PSPA7_0505 (189 aa).

Belongs to the UPF0301 (AlgH) family.

The sequence is that of UPF0301 protein PSPA7_0505 from Pseudomonas paraeruginosa (strain DSM 24068 / PA7) (Pseudomonas aeruginosa (strain PA7)).